A 141-amino-acid chain; its full sequence is Hemoglobin subunit alpha (141 aa).

The Globin domain occupies 1-141 (VLSPADKTNI…VSTVLVSKYR (141 aa)). At Ser-3 the chain carries Phosphoserine. Lys-7 carries the post-translational modification N6-succinyllysine. Thr-8 is modified (phosphothreonine). Lys-11 carries the post-translational modification N6-succinyllysine. Lys-16 carries the N6-acetyllysine; alternate modification. Lys-16 carries the N6-succinyllysine; alternate modification. Tyr-24 is subject to Phosphotyrosine. Ser-35 carries the phosphoserine modification. At Lys-40 the chain carries N6-succinyllysine. At Ser-49 the chain carries Phosphoserine. His-58 serves as a coordination point for O2. His-87 contributes to the heme b binding site. A Phosphoserine modification is found at Ser-102. Thr-108 carries the post-translational modification Phosphothreonine. A phosphoserine mark is found at Ser-124 and Ser-131. Thr-134 carries the post-translational modification Phosphothreonine. Residue Ser-138 is modified to Phosphoserine.

It belongs to the globin family. In terms of assembly, heterotetramer of two alpha chains and two beta chains. As to expression, red blood cells.

In terms of biological role, involved in oxygen transport from the lung to the various peripheral tissues. Its function is as follows. Hemopressin acts as an antagonist peptide of the cannabinoid receptor CNR1. Hemopressin-binding efficiently blocks cannabinoid receptor CNR1 and subsequent signaling. This is Hemoglobin subunit alpha (HBA) from Myotis velifer (Mouse-eared bat).